We begin with the raw amino-acid sequence, 823 residues long: Mitochondrial intermediate peptidase 2 (823 aa).

The N-terminal 33 residues, 1 to 33 (MRRLQQSLRRRSARRCPFILIPHRLLTTSYASY), are a transit peptide targeting the mitochondrion. The disordered stretch occupies residues 532-553 (IDGDGLPEDWDKPYGPGLEADK). Histidine 595 is a binding site for Zn(2+). Glutamate 596 is an active-site residue. 2 residues coordinate Zn(2+): histidine 599 and histidine 602.

It belongs to the peptidase M3 family. Zn(2+) is required as a cofactor.

It localises to the mitochondrion matrix. It catalyses the reaction Release of an N-terminal octapeptide as second stage of processing of some proteins imported into the mitochondrion.. Its function is as follows. Cleaves proteins, imported into the mitochondrion, to their mature size. While most mitochondrial precursor proteins are processed to the mature form in one step by mitochondrial processing peptidase (MPP), the sequential cleavage by MIP of an octapeptide after initial processing by MPP is a required step for a subgroup of nuclear-encoded precursor proteins destined for the matrix or the inner membrane. This chain is Mitochondrial intermediate peptidase 2 (OCT2), found in Cryptococcus neoformans var. neoformans serotype D (strain B-3501A) (Filobasidiella neoformans).